Reading from the N-terminus, the 302-residue chain is Quinolinate synthase (302 aa).

The iminosuccinate site is built by histidine 24 and serine 41. Position 86 (cysteine 86) interacts with [4Fe-4S] cluster. Iminosuccinate is bound by residues 112 to 114 (YVN) and serine 129. Residue cysteine 171 participates in [4Fe-4S] cluster binding. Iminosuccinate-binding positions include 197–199 (HPE) and threonine 214. A [4Fe-4S] cluster-binding site is contributed by cysteine 259.

It belongs to the quinolinate synthase family. Type 2 subfamily. Requires [4Fe-4S] cluster as cofactor.

It is found in the cytoplasm. It carries out the reaction iminosuccinate + dihydroxyacetone phosphate = quinolinate + phosphate + 2 H2O + H(+). The protein operates within cofactor biosynthesis; NAD(+) biosynthesis; quinolinate from iminoaspartate: step 1/1. Functionally, catalyzes the condensation of iminoaspartate with dihydroxyacetone phosphate to form quinolinate. The polypeptide is Quinolinate synthase (Dehalococcoides mccartyi (strain ATCC BAA-2266 / KCTC 15142 / 195) (Dehalococcoides ethenogenes (strain 195))).